A 131-amino-acid polypeptide reads, in one-letter code: MTAANQNYGTGRRKSSSARVFIKPGSGNITINQRSLEVYFGRETSRMVVRQPLELVELLDKLDLYITVKGGGISGQAGAIRHGITRALMEYDETLRPALRAAGFVTRDARRVERKKVGLHKARRRPQYSKR.

This sequence belongs to the universal ribosomal protein uS9 family.

The polypeptide is Small ribosomal subunit protein uS9 (Haemophilus ducreyi (strain 35000HP / ATCC 700724)).